The following is a 343-amino-acid chain: MEELTYKAAGVDIDAGMDVVRRIKSEVEKTLNPNVLAGIGGFSALYCLDVTGYNEPVLVSSTDGVGTKLKIAQALGKYDTIGIDLVAMVVNDLLTVGAKPLFFLDYVAVGKLNPEQVADLVKGMAEGCLEADCALVGGETAEMPGVYHPGDFDIAGFGVGVVEKSKIIDGSSVKAGDVIIGVASSGIHSNGLSLARKALLEYGNYHLTAYVEEFGKTLGEELLTPTRIYVKPVLDLMQKVEIKGMAHITGGGIVDNLPRILPEKVEARITVNWEIPKIFKLIEKAGNVPRREMWRTFNMGIGFILIVEEAKVQEAIKTLESFNYKAWVIGEITAGERRVIINE.

This sequence belongs to the AIR synthase family.

The protein localises to the cytoplasm. It catalyses the reaction 2-formamido-N(1)-(5-O-phospho-beta-D-ribosyl)acetamidine + ATP = 5-amino-1-(5-phospho-beta-D-ribosyl)imidazole + ADP + phosphate + H(+). The protein operates within purine metabolism; IMP biosynthesis via de novo pathway; 5-amino-1-(5-phospho-D-ribosyl)imidazole from N(2)-formyl-N(1)-(5-phospho-D-ribosyl)glycinamide: step 2/2. This chain is Phosphoribosylformylglycinamidine cyclo-ligase, found in Carboxydothermus hydrogenoformans (strain ATCC BAA-161 / DSM 6008 / Z-2901).